Here is a 240-residue protein sequence, read N- to C-terminus: 1-(5-phosphoribosyl)-5-[(5-phosphoribosylamino)methylideneamino] imidazole-4-carboxamide isomerase (240 aa).

The active-site Proton acceptor is the aspartate 8. The active-site Proton donor is the aspartate 129.

It belongs to the HisA/HisF family.

It is found in the cytoplasm. It catalyses the reaction 1-(5-phospho-beta-D-ribosyl)-5-[(5-phospho-beta-D-ribosylamino)methylideneamino]imidazole-4-carboxamide = 5-[(5-phospho-1-deoxy-D-ribulos-1-ylimino)methylamino]-1-(5-phospho-beta-D-ribosyl)imidazole-4-carboxamide. It participates in amino-acid biosynthesis; L-histidine biosynthesis; L-histidine from 5-phospho-alpha-D-ribose 1-diphosphate: step 4/9. The polypeptide is 1-(5-phosphoribosyl)-5-[(5-phosphoribosylamino)methylideneamino] imidazole-4-carboxamide isomerase (Clostridioides difficile (strain 630) (Peptoclostridium difficile)).